A 95-amino-acid chain; its full sequence is Co-chaperonin GroES (95 aa).

The protein belongs to the GroES chaperonin family. In terms of assembly, heptamer of 7 subunits arranged in a ring. Interacts with the chaperonin GroEL.

The protein resides in the cytoplasm. In terms of biological role, together with the chaperonin GroEL, plays an essential role in assisting protein folding. The GroEL-GroES system forms a nano-cage that allows encapsulation of the non-native substrate proteins and provides a physical environment optimized to promote and accelerate protein folding. GroES binds to the apical surface of the GroEL ring, thereby capping the opening of the GroEL channel. This Rickettsia rickettsii (strain Sheila Smith) protein is Co-chaperonin GroES.